Reading from the N-terminus, the 181-residue chain is Inner membrane-spanning protein YciB (181 aa).

5 helical membrane-spanning segments follow: residues 8 to 28 (FPII…ATAA), 53 to 73 (ITLI…NAIF), 76 to 96 (WKPT…HFFG), 121 to 141 (LSWA…VYNF), and 149 to 169 (FKLF…AFYI).

It belongs to the YciB family.

The protein localises to the cell inner membrane. Plays a role in cell envelope biogenesis, maintenance of cell envelope integrity and membrane homeostasis. The polypeptide is Inner membrane-spanning protein YciB (Coxiella burnetii (strain CbuK_Q154) (Coxiella burnetii (strain Q154))).